The primary structure comprises 464 residues: ATP synthase subunit beta (464 aa).

152-159 (GGAGVGKT) contacts ATP.

This sequence belongs to the ATPase alpha/beta chains family. In terms of assembly, F-type ATPases have 2 components, CF(1) - the catalytic core - and CF(0) - the membrane proton channel. CF(1) has five subunits: alpha(3), beta(3), gamma(1), delta(1), epsilon(1). CF(0) has three main subunits: a(1), b(2) and c(9-12). The alpha and beta chains form an alternating ring which encloses part of the gamma chain. CF(1) is attached to CF(0) by a central stalk formed by the gamma and epsilon chains, while a peripheral stalk is formed by the delta and b chains.

It localises to the cell membrane. The catalysed reaction is ATP + H2O + 4 H(+)(in) = ADP + phosphate + 5 H(+)(out). In terms of biological role, produces ATP from ADP in the presence of a proton gradient across the membrane. The catalytic sites are hosted primarily by the beta subunits. This Ureaplasma parvum serovar 3 (strain ATCC 27815 / 27 / NCTC 11736) protein is ATP synthase subunit beta.